Consider the following 78-residue polypeptide: Large ribosomal subunit protein uL29 (78 aa).

Belongs to the universal ribosomal protein uL29 family.

This is Large ribosomal subunit protein uL29 from Rippkaea orientalis (strain PCC 8801 / RF-1) (Cyanothece sp. (strain PCC 8801)).